We begin with the raw amino-acid sequence, 239 residues long: Heptaprenylglyceryl phosphate synthase (239 aa).

Residue lysine 12 coordinates sn-glycerol 1-phosphate. Mg(2+) is bound by residues aspartate 14 and threonine 40. Sn-glycerol 1-phosphate is bound by residues 159-164 (YLEYSG), glycine 189, and 209-210 (GN).

The protein belongs to the GGGP/HepGP synthase family. Group I subfamily. Homodimer. It depends on Mg(2+) as a cofactor.

It catalyses the reaction sn-glycerol 1-phosphate + all-trans-heptaprenyl diphosphate = 3-heptaprenyl-sn-glycero-1-phosphate + diphosphate. It functions in the pathway membrane lipid metabolism; glycerophospholipid metabolism. Functionally, prenyltransferase that catalyzes in vivo the transfer of the heptaprenyl moiety of heptaprenyl pyrophosphate (HepPP; 35 carbon atoms) to the C3 hydroxyl of sn-glycerol-1-phosphate (G1P), producing heptaprenylglyceryl phosphate (HepGP). This reaction is an ether-bond-formation step in the biosynthesis of archaea-type G1P-based membrane lipids found in Bacillales. To a much lesser extent, is also able to use geranylgeranyl diphosphate (GGPP; C20) as the prenyl donor. This chain is Heptaprenylglyceryl phosphate synthase, found in Geobacillus kaustophilus (strain HTA426).